The chain runs to 345 residues: N-acetyl-gamma-glutamyl-phosphate reductase (345 aa).

Residue Cys-149 is part of the active site.

This sequence belongs to the NAGSA dehydrogenase family. Type 1 subfamily.

It is found in the cytoplasm. It carries out the reaction N-acetyl-L-glutamate 5-semialdehyde + phosphate + NADP(+) = N-acetyl-L-glutamyl 5-phosphate + NADPH + H(+). Its pathway is amino-acid biosynthesis; L-arginine biosynthesis; N(2)-acetyl-L-ornithine from L-glutamate: step 3/4. In terms of biological role, catalyzes the NADPH-dependent reduction of N-acetyl-5-glutamyl phosphate to yield N-acetyl-L-glutamate 5-semialdehyde. This is N-acetyl-gamma-glutamyl-phosphate reductase from Bacillus cytotoxicus (strain DSM 22905 / CIP 110041 / 391-98 / NVH 391-98).